The following is a 456-amino-acid chain: Cell cycle checkpoint control protein Rad9 (456 aa).

The short motif at 300-302 (KRK) is the Nuclear localization signal element.

It belongs to the rad9 family. As to quaternary structure, component of the 9-1-1 checkpoint clamp complex consisting of Rad9 isoform A, Rad1 and Hus1-like; the interaction with Hus1-like is direct. Does not interact directly with Rad1; this interaction is probably mediated by Hus1-like. This complex probably also forms with Rad9 isoform B, however 9-1-1 complex containing Rad9 isoform A localizes to the nuclear periphery. Interacts with Brca2. In terms of tissue distribution, expressed in ovary.

The protein resides in the nucleus envelope. It localises to the nucleus. Functionally, component of the Rad9-Rad1-Hus1 (9-1-1) checkpoint clamp complex. In terms of biological role, targets the 9-1-1 complex to the nuclear periphery. Targeting to the nuclear periphery is disrupted in the presence of persistent double stranded break DNA damage, possibly as a function of the meiotic checkpoint. The protein is Cell cycle checkpoint control protein Rad9 of Drosophila melanogaster (Fruit fly).